The primary structure comprises 236 residues: 7-cyano-7-deazaguanine synthase (236 aa).

Residue 7-17 (CSGGLDSVSLA) participates in ATP binding. Cys185, Cys193, Cys196, and Cys199 together coordinate Zn(2+).

The protein belongs to the QueC family. Zn(2+) serves as cofactor.

It carries out the reaction 7-carboxy-7-deazaguanine + NH4(+) + ATP = 7-cyano-7-deazaguanine + ADP + phosphate + H2O + H(+). The protein operates within purine metabolism; 7-cyano-7-deazaguanine biosynthesis. In terms of biological role, catalyzes the ATP-dependent conversion of 7-carboxy-7-deazaguanine (CDG) to 7-cyano-7-deazaguanine (preQ(0)). This chain is 7-cyano-7-deazaguanine synthase, found in Agrobacterium fabrum (strain C58 / ATCC 33970) (Agrobacterium tumefaciens (strain C58)).